A 404-amino-acid polypeptide reads, in one-letter code: Tryptophan synthase beta chain (404 aa).

At K90 the chain carries N6-(pyridoxal phosphate)lysine.

It belongs to the TrpB family. As to quaternary structure, tetramer of two alpha and two beta chains. Requires pyridoxal 5'-phosphate as cofactor.

The enzyme catalyses (1S,2R)-1-C-(indol-3-yl)glycerol 3-phosphate + L-serine = D-glyceraldehyde 3-phosphate + L-tryptophan + H2O. Its pathway is amino-acid biosynthesis; L-tryptophan biosynthesis; L-tryptophan from chorismate: step 5/5. Functionally, the beta subunit is responsible for the synthesis of L-tryptophan from indole and L-serine. This Geobacillus thermodenitrificans (strain NG80-2) protein is Tryptophan synthase beta chain.